Reading from the N-terminus, the 335-residue chain is Rho guanine nucleotide exchange factor 39 (335 aa).

The DH domain maps to K22–I197. In terms of domain architecture, PH spans W227 to S331.

It is found in the cell membrane. In terms of biological role, promotes cell proliferation. This chain is Rho guanine nucleotide exchange factor 39 (ARHGEF39), found in Bos taurus (Bovine).